Consider the following 243-residue polypeptide: Zinc import ATP-binding protein ZnuC (243 aa).

One can recognise an ABC transporter domain in the interval 25–242 (LVVDSITLFY…AKFMSVFPEN (218 aa)). 57 to 64 (GPNGGGKT) provides a ligand contact to ATP.

This sequence belongs to the ABC transporter superfamily. Zinc importer (TC 3.A.1.15.5) family. As to quaternary structure, the complex is composed of two ATP-binding proteins (ZnuC), two transmembrane proteins (ZnuB) and a solute-binding protein (ZnuA).

The protein resides in the cell inner membrane. The catalysed reaction is Zn(2+)(out) + ATP(in) + H2O(in) = Zn(2+)(in) + ADP(in) + phosphate(in) + H(+)(in). In terms of biological role, part of the ABC transporter complex ZnuABC involved in zinc import. Responsible for energy coupling to the transport system. In Anaplasma phagocytophilum (strain HZ), this protein is Zinc import ATP-binding protein ZnuC.